Here is a 524-residue protein sequence, read N- to C-terminus: Phosphoenolpyruvate carboxykinase (ATP) (524 aa).

Positions 52, 188, and 194 each coordinate substrate. ATP is bound by residues Lys-194, His-213, and 229–237; that span reads GLSGTGKTT. Mn(2+)-binding residues include Lys-194 and His-213. Residue Asp-250 participates in Mn(2+) binding. The ATP site is built by Glu-278, Arg-314, and Thr-439. Arg-314 contributes to the substrate binding site.

It belongs to the phosphoenolpyruvate carboxykinase (ATP) family. The cofactor is Mn(2+).

Its subcellular location is the cytoplasm. It catalyses the reaction oxaloacetate + ATP = phosphoenolpyruvate + ADP + CO2. It functions in the pathway carbohydrate biosynthesis; gluconeogenesis. Functionally, involved in the gluconeogenesis. Catalyzes the conversion of oxaloacetate (OAA) to phosphoenolpyruvate (PEP) through direct phosphoryl transfer between the nucleoside triphosphate and OAA. This Campylobacter jejuni (strain RM1221) protein is Phosphoenolpyruvate carboxykinase (ATP).